A 962-amino-acid chain; its full sequence is Rho GTPase-activating protein syd-1 (962 aa).

Disordered stretches follow at residues 231–367 (GKKS…MRSD), 397–419 (PRTL…RIMT), and 437–471 (CGEE…NGSP). 4 stretches are compositionally biased toward polar residues: residues 243–261 (NATT…SSPR), 323–345 (SFNS…SSTA), 401–412 (RQPNDSNKSNSL), and 453–471 (PPFS…NGSP). The region spanning 572-696 (RAAGPGINVD…NDDRVFALNL (125 aa)) is the C2 domain. The region spanning 729–923 (VPLGRLVQRE…LDMNQASSSL (195 aa)) is the Rho-GAP domain. Positions 934 to 947 (VNSESGSDSPATSG) are enriched in polar residues. The segment at 934 to 962 (VNSESGSDSPATSGQKGGGGVSYVSESQC) is disordered.

It is found in the synapse. Functionally, probable GTPase activator for the Rho-type GTPases by converting them to an inactive GDP-bound state. Regulates the localization and assembly of presynaptic components during presynaptic development and is required for specifying the identity of axons during initial polarity acquisition. In these roles it is thought to act cell autonomously downstream of syg-1 and syg-2 and upstream of syd-2, possibly as a positive regulator of the latter. Required for the control of movement, egg-laying and the correct localization of elks-1. This Caenorhabditis briggsae protein is Rho GTPase-activating protein syd-1.